A 206-amino-acid polypeptide reads, in one-letter code: 3-demethoxyubiquinol 3-hydroxylase (206 aa).

Residues Glu55, Glu85, His88, Glu137, Glu169, and His172 each contribute to the Fe cation site.

Belongs to the COQ7 family. Fe cation is required as a cofactor.

It is found in the cell membrane. It catalyses the reaction a 5-methoxy-2-methyl-3-(all-trans-polyprenyl)benzene-1,4-diol + AH2 + O2 = a 3-demethylubiquinol + A + H2O. Its pathway is cofactor biosynthesis; ubiquinone biosynthesis. Catalyzes the hydroxylation of 2-nonaprenyl-3-methyl-6-methoxy-1,4-benzoquinol during ubiquinone biosynthesis. This is 3-demethoxyubiquinol 3-hydroxylase from Chromobacterium violaceum (strain ATCC 12472 / DSM 30191 / JCM 1249 / CCUG 213 / NBRC 12614 / NCIMB 9131 / NCTC 9757 / MK).